Here is a 607-residue protein sequence, read N- to C-terminus: Elongation factor 4 (607 aa).

Positions Ser-11 to Ala-193 constitute a tr-type G domain. GTP contacts are provided by residues Asp-23–Thr-28 and Asn-140–Asp-143.

Belongs to the TRAFAC class translation factor GTPase superfamily. Classic translation factor GTPase family. LepA subfamily.

It is found in the cell membrane. The enzyme catalyses GTP + H2O = GDP + phosphate + H(+). Required for accurate and efficient protein synthesis under certain stress conditions. May act as a fidelity factor of the translation reaction, by catalyzing a one-codon backward translocation of tRNAs on improperly translocated ribosomes. Back-translocation proceeds from a post-translocation (POST) complex to a pre-translocation (PRE) complex, thus giving elongation factor G a second chance to translocate the tRNAs correctly. Binds to ribosomes in a GTP-dependent manner. This chain is Elongation factor 4, found in Bacillus cereus (strain B4264).